A 68-amino-acid chain; its full sequence is Small cysteine-rich protein 2 (68 aa).

The first 24 residues, 1–24, serve as a signal peptide directing secretion; that stretch reads MAVKFHLCLLLIILVGMGAHVAFA.

It belongs to the Cnidaria small cysteine-rich protein (SCRiP) family. gamma subfamily. In terms of processing, contains 4 disulfide bonds.

The protein localises to the secreted. Its subcellular location is the nematocyst. Its function is as follows. Induces neurotoxic symptoms on zebrafish. Has also been claimed to be implied in calcification, but tests on homolog proteins suggest that proteins of this family have a neurotoxic function and not a calcification function. In Orbicella faveolata (Mountainous star coral), this protein is Small cysteine-rich protein 2.